The sequence spans 362 residues: Cobalt-precorrin-5B C(1)-methyltransferase (362 aa).

It belongs to the CbiD family.

It catalyses the reaction Co-precorrin-5B + S-adenosyl-L-methionine = Co-precorrin-6A + S-adenosyl-L-homocysteine. Its pathway is cofactor biosynthesis; adenosylcobalamin biosynthesis; cob(II)yrinate a,c-diamide from sirohydrochlorin (anaerobic route): step 6/10. Functionally, catalyzes the methylation of C-1 in cobalt-precorrin-5B to form cobalt-precorrin-6A. This is Cobalt-precorrin-5B C(1)-methyltransferase from Burkholderia vietnamiensis (strain G4 / LMG 22486) (Burkholderia cepacia (strain R1808)).